A 431-amino-acid chain; its full sequence is Gamma-glutamyl phosphate reductase (431 aa).

The protein belongs to the gamma-glutamyl phosphate reductase family.

It is found in the cytoplasm. The enzyme catalyses L-glutamate 5-semialdehyde + phosphate + NADP(+) = L-glutamyl 5-phosphate + NADPH + H(+). The protein operates within amino-acid biosynthesis; L-proline biosynthesis; L-glutamate 5-semialdehyde from L-glutamate: step 2/2. In terms of biological role, catalyzes the NADPH-dependent reduction of L-glutamate 5-phosphate into L-glutamate 5-semialdehyde and phosphate. The product spontaneously undergoes cyclization to form 1-pyrroline-5-carboxylate. The chain is Gamma-glutamyl phosphate reductase from Acetivibrio thermocellus (strain ATCC 27405 / DSM 1237 / JCM 9322 / NBRC 103400 / NCIMB 10682 / NRRL B-4536 / VPI 7372) (Clostridium thermocellum).